The primary structure comprises 256 residues: MQQSYNPQNSLTATTSYSEQEIVCICESLFNEGLQTGRTEQLANFIYNLPQCYQVMESVLKAQALVYFTTQNWKMLYKLLECSKFSPHNHTVLQNLWLDAHYKEAAKTKDRELGAVCKYRIRKKNPFPNTIWDGEETNYCFKSKSRNVLRDAYKKCQYPSVEDKRRLAQQTELSIIQVSNWFKNKRQRERAAGQLDRSSARSNDSDDGSSGCESKPPMNIDSPAPPPLPTSFDLQPYYPSPYTFAPHCDFSYIQNL.

Positions glycine 134 to glycine 193 form a DNA-binding region, homeobox. Residues glutamine 187–aspartate 233 form a disordered region.

This sequence belongs to the SIX/Sine oculis homeobox family. As to quaternary structure, interacts (via N-terminus) with eya-1 (via C-terminus). As to expression, shows expression only in the pharyngeal nervous system.

Its subcellular location is the nucleus. Acts as a transcription regulator. Binds to the sequence motif 5'-TCAGGTT-3'. Binds to the cis-regulatory element of proapoptotic factor egl-1 gene and together with eya-1 activates egl-1 expression to promote motor neuron M4 sister cell apoptosis. Also promotes apoptosis of I1 pharyngeal neuron sister cell. Together with eya-1, required to specify the coelomocyte fate in embryonic and postembryonic precursors. Required to establish and maintain the differentiation of all 14 classes of pharyngeal neurons. Controls the neurotransmitter signaling capacity of the neurons and is required for the expression of some neurotransmitter receptors including mgl-1, glr-2 and ser-7. Affects the neuropeptidergic identity of pharyngeal neurons. Required for the pharyngeal expression of sensory receptors gur-3, glu-7 and str-97, antimicrobial defense genes such as spp-12, gpla-1/flr-2 and htrl-1, and pan-pharyngeal nervous system genes such as kin-36. Required to establish and maintain pharyngeal nervous system architecture by ensuring correct axon and synapse organization. Required for expression of eya-1 which may act as a transcriptional cofactor to specify distinct pharyngeal neuron types. Cooperates with several homeobox proteins to specify distinct pharyngeal neuron types including unc-86 in the NSM and I1 neurons, ceh-14 in the I2 neuron, ceh-2 and pros-1 in the I3 neuron, ceh-45 in the M1 neuron, ceh-2 in the M3 neuron, ceh-28 and zag-1 in the M4 neuron, and vab-15 in the M5 neuron. The polypeptide is Homeobox protein ceh-34 (ceh-34) (Caenorhabditis elegans).